A 490-amino-acid polypeptide reads, in one-letter code: ATP synthase subunit beta, chloroplastic (490 aa).

170-177 contacts ATP; sequence GGAGVGKT.

Belongs to the ATPase alpha/beta chains family. In terms of assembly, F-type ATPases have 2 components, CF(1) - the catalytic core - and CF(0) - the membrane proton channel. CF(1) has five subunits: alpha(3), beta(3), gamma(1), delta(1), epsilon(1). CF(0) has four main subunits: a(1), b(1), b'(1) and c(9-12).

Its subcellular location is the plastid. The protein localises to the chloroplast thylakoid membrane. It catalyses the reaction ATP + H2O + 4 H(+)(in) = ADP + phosphate + 5 H(+)(out). Functionally, produces ATP from ADP in the presence of a proton gradient across the membrane. The catalytic sites are hosted primarily by the beta subunits. This Convolvulus arvensis (Field bindweed) protein is ATP synthase subunit beta, chloroplastic.